The primary structure comprises 254 residues: Alcohol dehydrogenase 2 (254 aa).

10–33 serves as a coordination point for NAD(+); that stretch reads FVAGLGGIGFDTSREIVKSGPKNL. Ser138 is a binding site for substrate. The Proton acceptor role is filled by Tyr151.

This sequence belongs to the short-chain dehydrogenases/reductases (SDR) family. In terms of assembly, homodimer.

The catalysed reaction is a primary alcohol + NAD(+) = an aldehyde + NADH + H(+). The enzyme catalyses a secondary alcohol + NAD(+) = a ketone + NADH + H(+). This chain is Alcohol dehydrogenase 2 (Adh2), found in Drosophila buzzatii (Fruit fly).